A 300-amino-acid polypeptide reads, in one-letter code: 17-beta-hydroxysteroid dehydrogenase 13 (300 aa).

The N-terminal stretch at 1 to 19 is a signal peptide; that stretch reads MNIILEILLLLITIIYSYL. Ser-33 is subject to Phosphoserine. Residue 40–67 participates in NAD(+) binding; it reads LITGAGHGIGRQTTYEFAKRQSILVLWD. Ser-172 contacts substrate. The active-site Proton acceptor is Tyr-185. Lys-189 is an NAD(+) binding site.

It belongs to the short-chain dehydrogenases/reductases (SDR) family. As to expression, highly expressed in the liver. Also detected in ovary, bone marrow, kidney, brain, lung, skeletal muscle, bladder and testis.

The protein resides in the lipid droplet. The protein localises to the endoplasmic reticulum. It localises to the cytoplasm. It carries out the reaction 17beta-estradiol + NAD(+) = estrone + NADH + H(+). The enzyme catalyses all-trans-retinol + NAD(+) = all-trans-retinal + NADH + H(+). It catalyses the reaction all-trans-retinal + NAD(+) + H2O = all-trans-retinoate + NADH + 2 H(+). In terms of biological role, plays a pivotal role in hepatic lipid metabolism. In vitro, it catalyzes the oxidation of a variety of lipid substrates, including 17beta-estradiol, retinol, retinal, and leukotriene B4. Functionally, has retinol/retinal dehydrogenase activity in vitro. Its function is as follows. Does not have retinol/retinal dehydrogenase activity in vitro. The chain is 17-beta-hydroxysteroid dehydrogenase 13 from Homo sapiens (Human).